We begin with the raw amino-acid sequence, 236 residues long: Putative (5-formylfuran-3-yl)methyl phosphate synthase (236 aa).

Catalysis depends on Lys38, which acts as the Schiff-base intermediate with substrate. The active-site Proton acceptor is Lys94.

It belongs to the MfnB family.

The catalysed reaction is 2 D-glyceraldehyde 3-phosphate = 4-(hydroxymethyl)-2-furancarboxaldehyde phosphate + phosphate + 2 H2O. Its function is as follows. Catalyzes the formation of 4-(hydroxymethyl)-2-furancarboxaldehyde phosphate (4-HFC-P) from two molecules of glyceraldehyde-3-P (GA-3-P). The polypeptide is Putative (5-formylfuran-3-yl)methyl phosphate synthase (Methylorubrum extorquens (Methylobacterium dichloromethanicum)).